The following is a 118-amino-acid chain: Cell division protein FtsB (118 aa).

The Cytoplasmic segment spans residues 1 to 3; that stretch reads MRL. The helical transmembrane segment at 4 to 21 threads the bilayer; the sequence is LFLVLLVLLGLIQYPLWL. Residues 22–118 lie on the Periplasmic side of the membrane; that stretch reads GKGGWFKVWD…PRPPATPPRR (97 aa). The stretch at 28-62 forms a coiled coil; the sequence is KVWDLQRQVAEQRETNDGLRARNTALEAEVRDLAT. A disordered region spans residues 88 to 118; it reads LPPGTPLPSGNSTPQASALSKPRPPATPPRR. The segment covering 95–105 has biased composition (polar residues); it reads PSGNSTPQASA. Pro residues predominate over residues 109–118; sequence PRPPATPPRR.

The protein belongs to the FtsB family. Part of a complex composed of FtsB, FtsL and FtsQ.

The protein resides in the cell inner membrane. Its function is as follows. Essential cell division protein. May link together the upstream cell division proteins, which are predominantly cytoplasmic, with the downstream cell division proteins, which are predominantly periplasmic. The sequence is that of Cell division protein FtsB from Bordetella parapertussis (strain 12822 / ATCC BAA-587 / NCTC 13253).